Here is a 201-residue protein sequence, read N- to C-terminus: Transmembrane 4 L6 family member 18 (201 aa).

Topologically, residues 1 to 9 are cytoplasmic; the sequence is MGSRKCGGC. Residues 10–30 form a helical membrane-spanning segment; that stretch reads LSCLLIPLALWSIIVNILLYF. Residues 31–49 lie on the Extracellular side of the membrane; that stretch reads PNGQTSYASSNKLTNYVWY. The helical transmembrane segment at 50–70 threads the bilayer; sequence FEGICFSGIMMLIVTTVLLVL. The Cytoplasmic portion of the chain corresponds to 71–93; it reads ENNNNYKCCQSENCSKKYVTLLS. A helical membrane pass occupies residues 94-114; it reads IIFSSLGIAFSGYCLVISALG. The Extracellular segment spans residues 115 to 157; it reads LVQGPYCRTLDGWEYAFEGTAGRFLTDSSIWIQCLEPAHVVEW. Residues 158–178 traverse the membrane as a helical segment; that stretch reads NIILFSILITLSGLQVIICLI. Residues 179 to 201 are Cytoplasmic-facing; the sequence is RVVMQLSKILCGSYSVIFQPGII.

The protein belongs to the L6 tetraspanin family.

The protein resides in the membrane. This is Transmembrane 4 L6 family member 18 (TM4SF18) from Homo sapiens (Human).